A 533-amino-acid chain; its full sequence is MNFDVAVVGSGLAGLTVALHLADHRRVVVISKRTLPEGASDWAQGGIAAVLDSNDSHDEHVDDTLIAGAGLCDEAATRYIVENGRAAIEWLIGHGVPFTRDARAELGFHLTREGGHRHRRIIHAADATGHAVVTTLVDKVRAHPNITLLEDHFAIDLVTDAKLGLPGMRCHGLYVLDCKRGDVKTIIASQTVLATGGAGKVYLYTTNPDTATGDGIAMAWRAGCRVANMEFIQFHPTCLYHPFAKSFLISEAVRGEGGKLVLPDGTRFMPAHDERAELAPRDIVARAIDFEMKKRGLDCVYLDISHQSPAFIQEHFPTILARCLELGIDITRQPIPVVPAAHYTCGGVVTDQLGRTDIAGLYAVGETAYTGLHGANRLASNSLLECMVIGRGAAQDILGQPATAPTPTPIPAWDESRVTDADEEVVVSHNWDELRRMMWNYVGIVRTNKRLERAQHRIALLREEIAEYYANFRVSHDLLELRNLVEAASLIVDSALSRHESRGLHFSRDYPQTLPKALPTVMQPAHRRTSRKH.

Residues 10–13 (SGLA), Lys32, 39–46 (ASDWAQGG), and Asp214 contribute to the FAD site. The active-site Proton donor/acceptor is Arg281. FAD-binding positions include Glu366 and 382-383 (SL).

The protein belongs to the FAD-dependent oxidoreductase 2 family. NadB subfamily. The cofactor is FAD.

Its subcellular location is the cytoplasm. It catalyses the reaction L-aspartate + O2 = iminosuccinate + H2O2. It functions in the pathway cofactor biosynthesis; NAD(+) biosynthesis; iminoaspartate from L-aspartate (oxidase route): step 1/1. Catalyzes the oxidation of L-aspartate to iminoaspartate, the first step in the de novo biosynthesis of NAD(+). This Ralstonia nicotianae (strain ATCC BAA-1114 / GMI1000) (Ralstonia solanacearum) protein is L-aspartate oxidase 1 (nadB1).